Here is a 310-residue protein sequence, read N- to C-terminus: B3 domain-containing transcription factor NGA1 (310 aa).

Residues 1-26 (MMTDLSLTRDEDEEEAKPLAEEEGAR) form a disordered region. Basic and acidic residues predominate over residues 16–26 (AKPLAEEEGAR). The TF-B3 DNA-binding region spans 35 to 141 (FDKVVTPSDV…RLFIDWRRRP (107 aa)). Residues 251 to 268 (ESGMTNSTEEESSSSGGS) are compositionally biased toward low complexity. Residues 251–310 (ESGMTNSTEEESSSSGGSLPRGGGGGASSSSFFQLRLGSSSEDDHFTKKGKSSLSFDLDQ) are disordered.

Interacts with BRX. Interacts with BZIP30.

It localises to the nucleus. Regulates lateral organ growth. Functionally redundant with NGA2, NGA3 and NGA4. This chain is B3 domain-containing transcription factor NGA1 (NGA1), found in Arabidopsis thaliana (Mouse-ear cress).